The chain runs to 315 residues: CRISPR-associated endonuclease Cas1 1 (315 aa).

Mn(2+) is bound by residues E144, H208, and E223.

It belongs to the CRISPR-associated endonuclease Cas1 family. Homodimer, forms a heterotetramer with a Cas2 homodimer. Requires Mg(2+) as cofactor. Mn(2+) serves as cofactor.

Functionally, CRISPR (clustered regularly interspaced short palindromic repeat), is an adaptive immune system that provides protection against mobile genetic elements (viruses, transposable elements and conjugative plasmids). CRISPR clusters contain spacers, sequences complementary to antecedent mobile elements, and target invading nucleic acids. CRISPR clusters are transcribed and processed into CRISPR RNA (crRNA). Acts as a dsDNA endonuclease. Involved in the integration of spacer DNA into the CRISPR cassette. This chain is CRISPR-associated endonuclease Cas1 1, found in Thermus thermophilus (strain ATCC 27634 / DSM 579 / HB8).